The chain runs to 426 residues: Glutamate-1-semialdehyde 2,1-aminomutase (426 aa).

Lys265 carries the N6-(pyridoxal phosphate)lysine modification.

The protein belongs to the class-III pyridoxal-phosphate-dependent aminotransferase family. HemL subfamily. As to quaternary structure, homodimer. Pyridoxal 5'-phosphate is required as a cofactor.

It localises to the cytoplasm. It catalyses the reaction (S)-4-amino-5-oxopentanoate = 5-aminolevulinate. It participates in porphyrin-containing compound metabolism; protoporphyrin-IX biosynthesis; 5-aminolevulinate from L-glutamyl-tRNA(Glu): step 2/2. In Salmonella choleraesuis (strain SC-B67), this protein is Glutamate-1-semialdehyde 2,1-aminomutase.